The sequence spans 506 residues: Maturase K (506 aa).

The protein belongs to the intron maturase 2 family. MatK subfamily.

The protein localises to the plastid. Its subcellular location is the chloroplast. Usually encoded in the trnK tRNA gene intron. Probably assists in splicing its own and other chloroplast group II introns. The chain is Maturase K from Olea europaea (Common olive).